Consider the following 137-residue polypeptide: Probable disulfide formation protein C (137 aa).

A helical transmembrane segment spans residues 6–25; sequence ENLMLGSWLTALTAMLGSLY. Cys35 and Cys38 are disulfide-bonded. The next 2 helical transmembrane spans lie at 40 to 59 and 66 to 83; these read YQRIIMYPLVLILFIGYLKR and YSLWFSLIGMFTSLYHYS. Cys97 and Cys102 are oxidised to a cystine. A helical membrane pass occupies residues 111-133; it reads GFVTIPFLAFTAFVIIFICSLLI.

Belongs to the DsbB family. BdbC subfamily.

The protein localises to the cell membrane. Required for disulfide bond formation in some proteins. The sequence is that of Probable disulfide formation protein C from Halalkalibacterium halodurans (strain ATCC BAA-125 / DSM 18197 / FERM 7344 / JCM 9153 / C-125) (Bacillus halodurans).